A 323-amino-acid chain; its full sequence is Aquaporin-4 (323 aa).

At 1–36 the chain is on the cytoplasmic side; the sequence is MSDGAAARRWGKCGPPCSRESIMVAFKGVWTQAFWK. S-palmitoyl cysteine attachment occurs at residues C13 and C17. The chain crosses the membrane as a helical span at residues 37-57; sequence AVTAEFLAMLIFVLLSVGSTI. Over 58 to 69 the chain is Extracellular; the sequence is NWGGSENPLPVD. Residues 70 to 89 traverse the membrane as a helical segment; sequence MVLISLCFGLSIATMVQCFG. Over 90 to 93 the chain is Cytoplasmic; sequence HISG. Residues 94–101 constitute an intramembrane region (discontinuously helical); it reads GHINPAVT. Residues 97 to 99 carry the NPA 1 motif; sequence NPA. Over 102 to 115 the chain is Cytoplasmic; the sequence is VAMVCTRKISIAKS. Phosphoserine; by PKG is present on S111. The chain crosses the membrane as a helical span at residues 116 to 136; the sequence is VFYITAQCLGAIIGAGILYLV. Topologically, residues 137–155 are extracellular; it reads TPPSVVGGLGVTTVHGNLT. N-linked (GlcNAc...) asparagine glycosylation occurs at N153. Residues 156–176 traverse the membrane as a helical segment; it reads AGHGLLVELIITFQLVFTIFA. The Cytoplasmic segment spans residues 177–184; it reads SCDSKRTD. S180 bears the Phosphoserine; by PKC mark. Residues 185-205 traverse the membrane as a helical segment; it reads VTGSVALAIGFSVAIGHLFAI. The Extracellular portion of the chain corresponds to 206 to 208; sequence NYT. Positions 209–222 form an intramembrane region, discontinuously helical; that stretch reads GASMNPARSFGPAV. Residues 213–215 carry the NPA 2 motif; sequence NPA. At 223–231 the chain is on the extracellular side; it reads IMGNWENHW. The helical transmembrane segment at 232–252 threads the bilayer; sequence IYWVGPIIGAVLAGALYEYVF. Topologically, residues 253–323 are cytoplasmic; the sequence is CPDVELKRRL…DSSGEVLSSV (71 aa). S276 and S285 each carry phosphoserine. T289 carries the phosphothreonine modification. Phosphoserine is present on S321.

This sequence belongs to the MIP/aquaporin (TC 1.A.8) family. In terms of assembly, homotetramer. The tetramers can form oligomeric arrays in membranes. The size of the oligomers differs between tissues and is smaller in skeletal muscle than in brain. Interaction between AQP4 oligomeric arrays in close-by cells can contribute to cell-cell adhesion. Part of a complex containing MLC1, TRPV4, HEPACAM and ATP1B1. Post-translationally, phosphorylation by PKC at Ser-180 promotes internalization from the cell membrane, reducing the conductance by 50%. Phosphorylation by PKG at Ser-111 in response to glutamate increases conductance by 40%. Isoform Long: Palmitoylated on its N-terminal region. Isoform 3: Not palmitoylated. As to expression, detected in cerebellum. Detected on pericapillary astrocyte endfeet in cerebellum, and in skeletal muscle. Detected in glial lamellae in the hypothalamus (at protein level). Abundant in mature brain cortex, cerebellum and spinal cord. Highly expressed in the ependymal cell lining the aqueductal system and over the space of the brain in contact with the subarachnoid space. Detected in paraventricular and supraoptic nuclei, the granule cell layer of the dentate gyrus and the Purkinje cell layer in the cerebellum. Only weakly detectable in eye, kidney, intestine, and lung.

It localises to the cell membrane. The protein localises to the basolateral cell membrane. The protein resides in the endosome membrane. It is found in the sarcolemma. Its subcellular location is the cell projection. It catalyses the reaction H2O(in) = H2O(out). Forms a water-specific channel. Plays an important role in brain water homeostasis and in glymphatic solute transport. Required for a normal rate of water exchange across the blood brain interface. Required for normal levels of cerebrospinal fluid influx into the brain cortex and parenchyma along paravascular spaces that surround penetrating arteries, and for normal drainage of interstitial fluid along paravenous drainage pathways. Thereby, it is required for normal clearance of solutes from the brain interstitial fluid, including soluble beta-amyloid peptides derived from APP. Plays a redundant role in urinary water homeostasis and urinary concentrating ability. The polypeptide is Aquaporin-4 (Aqp4) (Rattus norvegicus (Rat)).